Reading from the N-terminus, the 337-residue chain is Biotin synthase (337 aa).

Positions 52 to 281 (ADIQRASLLS…RSRVRLSAGR (230 aa)) constitute a Radical SAM core domain. [4Fe-4S] cluster contacts are provided by Cys-67, Cys-71, and Cys-74. Residues Cys-112, Cys-144, Cys-204, and Arg-276 each coordinate [2Fe-2S] cluster.

This sequence belongs to the radical SAM superfamily. Biotin synthase family. As to quaternary structure, homodimer. It depends on [4Fe-4S] cluster as a cofactor. [2Fe-2S] cluster is required as a cofactor.

The catalysed reaction is (4R,5S)-dethiobiotin + (sulfur carrier)-SH + 2 reduced [2Fe-2S]-[ferredoxin] + 2 S-adenosyl-L-methionine = (sulfur carrier)-H + biotin + 2 5'-deoxyadenosine + 2 L-methionine + 2 oxidized [2Fe-2S]-[ferredoxin]. It functions in the pathway cofactor biosynthesis; biotin biosynthesis; biotin from 7,8-diaminononanoate: step 2/2. Its function is as follows. Catalyzes the conversion of dethiobiotin (DTB) to biotin by the insertion of a sulfur atom into dethiobiotin via a radical-based mechanism. This chain is Biotin synthase, found in Methylobacterium radiotolerans (strain ATCC 27329 / DSM 1819 / JCM 2831 / NBRC 15690 / NCIMB 10815 / 0-1).